A 459-amino-acid chain; its full sequence is MRLVVIGVNHKTAPVALRERLALVGDDVNIALAQLQGFSDGSVIVSTCNRTEIYALVPESILSPNTLLASSALSVVESSISLNSSTNISSTIISAHILKIKTWLADFKQLSLDEIDPYLYVHRDMHALTHWLRVAAGLDSMILGEPQILGQIKRAVHLAQDQKALSNQLGWIVDQVFAAAKRVRNETQVGAQAVSLSYAAAKLVTQIFDDLPSRTLLVVAAGEMNRLVAMHIAGLGVGRIIICNRNPERAEALAAELRNPKRQIEVRTLQELPQVLAEADIVSSCSGSMDILIDKTMTLRALKSRRYQPMLMIDLAVPRDIDSTVSRIDDVYLYSVDDLQHVIAGNIEQRRQAAVDAELLVSQLVVEMDRRFQVRQVGKDIQQYRSRTHEQVDKLLQESIAKLQGDNANPEDIMIELTRRLTQNLTHAPSKLMRKAAREGDNELLDFVVSGLQDAHRHH.

Residues 47 to 50 (TCNR), S140, 145 to 147 (EPQ), and Q151 contribute to the substrate site. C48 serves as the catalytic Nucleophile. 220–225 (AAGEMN) is a binding site for NADP(+).

The protein belongs to the glutamyl-tRNA reductase family. Homodimer.

The catalysed reaction is (S)-4-amino-5-oxopentanoate + tRNA(Glu) + NADP(+) = L-glutamyl-tRNA(Glu) + NADPH + H(+). It functions in the pathway porphyrin-containing compound metabolism; protoporphyrin-IX biosynthesis; 5-aminolevulinate from L-glutamyl-tRNA(Glu): step 1/2. Functionally, catalyzes the NADPH-dependent reduction of glutamyl-tRNA(Glu) to glutamate 1-semialdehyde (GSA). The sequence is that of Glutamyl-tRNA reductase from Psychrobacter arcticus (strain DSM 17307 / VKM B-2377 / 273-4).